A 700-amino-acid polypeptide reads, in one-letter code: Methionine--tRNA ligase (700 aa).

The short motif at 14 to 24 is the 'HIGH' region element; that stretch reads PYANGPVHLGH. Zn(2+) contacts are provided by Cys146, Cys149, Cys159, and Cys162. The short motif at 344 to 348 is the 'KMSKS' region element; sequence KFSKS. Lys347 is a binding site for ATP. The 102-residue stretch at 599 to 700 folds into the tRNA-binding domain; sequence DFLKVDLRVA…GEEINGRQIQ (102 aa).

Belongs to the class-I aminoacyl-tRNA synthetase family. MetG type 1 subfamily. Homodimer. Requires Zn(2+) as cofactor.

Its subcellular location is the cytoplasm. The enzyme catalyses tRNA(Met) + L-methionine + ATP = L-methionyl-tRNA(Met) + AMP + diphosphate. Is required not only for elongation of protein synthesis but also for the initiation of all mRNA translation through initiator tRNA(fMet) aminoacylation. The polypeptide is Methionine--tRNA ligase (Pelodictyon phaeoclathratiforme (strain DSM 5477 / BU-1)).